A 293-amino-acid chain; its full sequence is Pantothenate synthetase (293 aa).

An ATP-binding site is contributed by 30–37 (MGNLHEGH). The active-site Proton donor is the H37. A (R)-pantoate-binding site is contributed by Q61. Beta-alanine is bound at residue Q61. 149 to 152 (GEKD) contacts ATP. (R)-pantoate is bound at residue Q155. ATP contacts are provided by residues V178 and 186-189 (MSSR).

The protein belongs to the pantothenate synthetase family. Homodimer.

The protein resides in the cytoplasm. The enzyme catalyses (R)-pantoate + beta-alanine + ATP = (R)-pantothenate + AMP + diphosphate + H(+). It functions in the pathway cofactor biosynthesis; (R)-pantothenate biosynthesis; (R)-pantothenate from (R)-pantoate and beta-alanine: step 1/1. In terms of biological role, catalyzes the condensation of pantoate with beta-alanine in an ATP-dependent reaction via a pantoyl-adenylate intermediate. In Vibrio cholerae serotype O1 (strain ATCC 39541 / Classical Ogawa 395 / O395), this protein is Pantothenate synthetase.